A 355-amino-acid polypeptide reads, in one-letter code: UDP-3-O-acylglucosamine N-acyltransferase (355 aa).

His252 functions as the Proton acceptor in the catalytic mechanism.

Belongs to the transferase hexapeptide repeat family. LpxD subfamily. As to quaternary structure, homotrimer.

The enzyme catalyses a UDP-3-O-[(3R)-3-hydroxyacyl]-alpha-D-glucosamine + a (3R)-hydroxyacyl-[ACP] = a UDP-2-N,3-O-bis[(3R)-3-hydroxyacyl]-alpha-D-glucosamine + holo-[ACP] + H(+). It functions in the pathway bacterial outer membrane biogenesis; LPS lipid A biosynthesis. In terms of biological role, catalyzes the N-acylation of UDP-3-O-acylglucosamine using 3-hydroxyacyl-ACP as the acyl donor. Is involved in the biosynthesis of lipid A, a phosphorylated glycolipid that anchors the lipopolysaccharide to the outer membrane of the cell. The sequence is that of UDP-3-O-acylglucosamine N-acyltransferase from Polynucleobacter necessarius subsp. necessarius (strain STIR1).